Reading from the N-terminus, the 192-residue chain is Pyridoxal 5'-phosphate synthase subunit PdxT (192 aa).

Residue 46–48 participates in L-glutamine binding; the sequence is GES. Catalysis depends on Cys78, which acts as the Nucleophile. L-glutamine contacts are provided by residues Arg106 and 135-136; that span reads IR. Active-site charge relay system residues include His171 and Glu173.

This sequence belongs to the glutaminase PdxT/SNO family. In the presence of PdxS, forms a dodecamer of heterodimers. Only shows activity in the heterodimer.

The catalysed reaction is aldehydo-D-ribose 5-phosphate + D-glyceraldehyde 3-phosphate + L-glutamine = pyridoxal 5'-phosphate + L-glutamate + phosphate + 3 H2O + H(+). It carries out the reaction L-glutamine + H2O = L-glutamate + NH4(+). The protein operates within cofactor biosynthesis; pyridoxal 5'-phosphate biosynthesis. In terms of biological role, catalyzes the hydrolysis of glutamine to glutamate and ammonia as part of the biosynthesis of pyridoxal 5'-phosphate. The resulting ammonia molecule is channeled to the active site of PdxS. The polypeptide is Pyridoxal 5'-phosphate synthase subunit PdxT (Kosmotoga olearia (strain ATCC BAA-1733 / DSM 21960 / TBF 19.5.1)).